The sequence spans 238 residues: Glyceraldehyde 3-phosphate phosphatase (238 aa).

This sequence belongs to the HAD-like hydrolase superfamily. Requires Mg(2+) as cofactor.

In terms of biological role, catalyzes the dephosphorylation of D,L-glyceraldehyde 3-phosphate in vitro. In Pyrococcus abyssi (strain GE5 / Orsay), this protein is Glyceraldehyde 3-phosphate phosphatase.